The primary structure comprises 167 residues: uncharacterized protein (167 aa).

This is an uncharacterized protein from Acidianus bottle-shaped virus (isolate Italy/Pozzuoli) (ABV).